The sequence spans 62 residues: Large ribosomal subunit protein uL29 (62 aa).

The protein belongs to the universal ribosomal protein uL29 family.

The sequence is that of Large ribosomal subunit protein uL29 from Desulfatibacillum aliphaticivorans.